Reading from the N-terminus, the 254-residue chain is Ribosomal RNA large subunit methyltransferase E (254 aa).

The interval 1-28 (MTTPPRGPDGRPLKVRVKKSRGRTTSSQ) is disordered. Basic residues predominate over residues 13 to 22 (LKVRVKKSRG). S-adenosyl-L-methionine-binding residues include G80, W82, D103, D119, and D143. K183 (proton acceptor) is an active-site residue. Residues 231 to 254 (DRAETDDAGTDGTGTAEAQAPRDQ) form a disordered region.

Belongs to the class I-like SAM-binding methyltransferase superfamily. RNA methyltransferase RlmE family.

It localises to the cytoplasm. The catalysed reaction is uridine(2552) in 23S rRNA + S-adenosyl-L-methionine = 2'-O-methyluridine(2552) in 23S rRNA + S-adenosyl-L-homocysteine + H(+). Functionally, specifically methylates the uridine in position 2552 of 23S rRNA at the 2'-O position of the ribose in the fully assembled 50S ribosomal subunit. The sequence is that of Ribosomal RNA large subunit methyltransferase E from Xanthobacter autotrophicus (strain ATCC BAA-1158 / Py2).